We begin with the raw amino-acid sequence, 156 residues long: ATP synthase subunit b (156 aa).

A helical membrane pass occupies residues 5–25 (VTLIGQTVAFIIFVWFCMKFV).

The protein belongs to the ATPase B chain family. F-type ATPases have 2 components, F(1) - the catalytic core - and F(0) - the membrane proton channel. F(1) has five subunits: alpha(3), beta(3), gamma(1), delta(1), epsilon(1). F(0) has three main subunits: a(1), b(2) and c(10-14). The alpha and beta chains form an alternating ring which encloses part of the gamma chain. F(1) is attached to F(0) by a central stalk formed by the gamma and epsilon chains, while a peripheral stalk is formed by the delta and b chains.

The protein localises to the cell inner membrane. Its function is as follows. F(1)F(0) ATP synthase produces ATP from ADP in the presence of a proton or sodium gradient. F-type ATPases consist of two structural domains, F(1) containing the extramembraneous catalytic core and F(0) containing the membrane proton channel, linked together by a central stalk and a peripheral stalk. During catalysis, ATP synthesis in the catalytic domain of F(1) is coupled via a rotary mechanism of the central stalk subunits to proton translocation. Functionally, component of the F(0) channel, it forms part of the peripheral stalk, linking F(1) to F(0). The protein is ATP synthase subunit b of Shewanella loihica (strain ATCC BAA-1088 / PV-4).